We begin with the raw amino-acid sequence, 328 residues long: Phosphate acyltransferase (328 aa).

The protein belongs to the PlsX family. As to quaternary structure, homodimer. Probably interacts with PlsY.

The protein resides in the cytoplasm. It carries out the reaction a fatty acyl-[ACP] + phosphate = an acyl phosphate + holo-[ACP]. It participates in lipid metabolism; phospholipid metabolism. In terms of biological role, catalyzes the reversible formation of acyl-phosphate (acyl-PO(4)) from acyl-[acyl-carrier-protein] (acyl-ACP). This enzyme utilizes acyl-ACP as fatty acyl donor, but not acyl-CoA. The sequence is that of Phosphate acyltransferase from Campylobacter jejuni subsp. jejuni serotype O:23/36 (strain 81-176).